A 212-amino-acid polypeptide reads, in one-letter code: Imidazole glycerol phosphate synthase subunit HisH (212 aa).

Residues leucine 2–proline 212 form the Glutamine amidotransferase type-1 domain. Cysteine 87 functions as the Nucleophile in the catalytic mechanism. Residues histidine 192 and glutamate 194 contribute to the active site.

As to quaternary structure, heterodimer of HisH and HisF.

It is found in the cytoplasm. The catalysed reaction is 5-[(5-phospho-1-deoxy-D-ribulos-1-ylimino)methylamino]-1-(5-phospho-beta-D-ribosyl)imidazole-4-carboxamide + L-glutamine = D-erythro-1-(imidazol-4-yl)glycerol 3-phosphate + 5-amino-1-(5-phospho-beta-D-ribosyl)imidazole-4-carboxamide + L-glutamate + H(+). It carries out the reaction L-glutamine + H2O = L-glutamate + NH4(+). Its pathway is amino-acid biosynthesis; L-histidine biosynthesis; L-histidine from 5-phospho-alpha-D-ribose 1-diphosphate: step 5/9. Functionally, IGPS catalyzes the conversion of PRFAR and glutamine to IGP, AICAR and glutamate. The HisH subunit catalyzes the hydrolysis of glutamine to glutamate and ammonia as part of the synthesis of IGP and AICAR. The resulting ammonia molecule is channeled to the active site of HisF. In Ruegeria pomeroyi (strain ATCC 700808 / DSM 15171 / DSS-3) (Silicibacter pomeroyi), this protein is Imidazole glycerol phosphate synthase subunit HisH.